Consider the following 415-residue polypeptide: Multidrug resistance protein MdtA (415 aa).

Residues 1 to 21 (MKGSYKSRWVIVIVVVIAAIA) form the signal peptide. Disordered stretches follow at residues 32 to 59 (SRSAAPGATKQAQQSPAGGRRGMRSGPL) and 392 to 415 (EAQSATTSEEKATSREYAKKGARS). A compositionally biased stretch (basic and acidic residues) spans 399 to 415 (SEEKATSREYAKKGARS).

The protein belongs to the membrane fusion protein (MFP) (TC 8.A.1) family. Part of a tripartite efflux system composed of MdtA, MdtB and MdtC.

The protein resides in the cell inner membrane. The MdtABC tripartite complex confers resistance against novobiocin and deoxycholate. The polypeptide is Multidrug resistance protein MdtA (Escherichia coli (strain SMS-3-5 / SECEC)).